The primary structure comprises 116 residues: Dynein light chain Tctex-type 3 (116 aa).

Tyr4 is subject to 3'-nitrotyrosine.

Belongs to the dynein light chain Tctex-type family. Homodimer. The cytoplasmic dynein 1 complex consists of two catalytic heavy chains (HCs) and a number of non-catalytic subunits presented by intermediate chains (ICs), light intermediate chains (LICs) and light chains (LCs); the composition seems to vary in respect to the IC, LIC and LC composition. The heavy chain homodimer serves as a scaffold for the probable homodimeric assembly of the respective non-catalytic subunits. The ICs and LICs bind directly to the HC dimer and the LCs assemble on the IC dimer. DYNLT1 and DYNLT3 compete for association with dynein IC (DYNC1I1 or DYNC1I2). Self-associates. Interacts with DYNC1I1 and DYNC1I2. Interacts with BUB3. Interacts with SATB1 in nucleus to form complex with matrix attachment regions (MARs) of DNA.

It is found in the nucleus. The protein localises to the cytoplasm. Its subcellular location is the cytoskeleton. It localises to the chromosome. The protein resides in the centromere. It is found in the kinetochore. Its function is as follows. Acts as one of several non-catalytic accessory components of the cytoplasmic dynein 1 complex that are thought to be involved in linking dynein to cargos and to adapter proteins that regulate dynein function. Cytoplasmic dynein 1 acts as a motor for the intracellular retrograde motility of vesicles and organelles along microtubules. Probably binds BUB3 as part of transport cargo. Required for the efficient progression through mitosis. The protein is Dynein light chain Tctex-type 3 (DYNLT3) of Ovis aries (Sheep).